Consider the following 319-residue polypeptide: MINITAITTEHQLLKNIPIERVEQPDIAWYWVDFYGPEDTETALLRDFFHFHPLAIEDCFQHMQRPKLDHYDGYRFYVIHALNKETLETEEVDIFQGEKFVVTFHLHETPGIAKVRERLYASPDILKKGPGHISYMIMDQLVDEYFPLVYKIEDRLNEIEESRPHKTYGTLMNEVFDLRTDLLHLRRTIIPMRDLLYRILSLDHVKEQRETKAYFSDIYDHLLKLSEIVESNRDMTSDLRDSYVTLNSNRMNAIMMTLTIVSTIFIPLTFIAGVYGMNFDFMPELHWKYGYFAVLGLMAALVIGMLIWFVHKGWFNIFK.

2 consecutive transmembrane segments (helical) span residues 254-274 (IMMTLTIVSTIFIPLTFIAGV) and 290-310 (GYFAVLGLMAALVIGMLIWFV).

Belongs to the CorA metal ion transporter (MIT) (TC 1.A.35) family.

It is found in the cell membrane. This chain is Putative metal ion transporter YfjQ (yfjQ), found in Bacillus subtilis (strain 168).